A 555-amino-acid chain; its full sequence is uncharacterized protein (555 aa).

The Extracellular segment spans residues 1 to 83; the sequence is MSNEDETTRL…GRRKLLCLYG (83 aa). The chain crosses the membrane as a helical span at residues 84-104; that stretch reads LVMIICIAESISMTATIPLVM. Topologically, residues 105–125 are cytoplasmic; that stretch reads DKVAEGISDENGHYDSVAVQT. The chain crosses the membrane as a helical span at residues 126-146; it reads IVSSISSSTMMIAGAISIFMA. Residues 147–188 are Extracellular-facing; that stretch reads GKWGELSDRIGRVRVFKYMSGIRVIGLLTHVFTLSSKMKYHK. A helical membrane pass occupies residues 189 to 209; the sequence is WAIVLTACIVPSFGGLFALVA. The Cytoplasmic segment spans residues 210–229; the sequence is NGNSYVSDIVKTEHRMVTIG. Residues 230 to 250 form a helical membrane-spanning segment; sequence IMMSCIYATMGVGPMFGSFLV. The Extracellular segment spans residues 251 to 257; sequence KWTHGNG. Residues 258-278 form a helical membrane-spanning segment; sequence FIPIYTSIAFVILALIICETI. The Cytoplasmic portion of the chain corresponds to 279 to 356; sequence MVEPRHETQM…LVPRHTVILL (78 aa). The disordered stretch occupies residues 289–311; it reads AHSQSTYTKRREKLRSQSGSDDA. The helical transmembrane segment at 357–377 threads the bilayer; it reads IVLDILFVCGTTSCMPALILF. Topologically, residues 378 to 386 are extracellular; it reads STYEYKWHA. Residues 387–407 form a helical membrane-spanning segment; it reads VELGYFISILGIGRGVVLLVV. Over 408–428 the chain is Cytoplasmic; that stretch reads SPTLLYTLKRIYQHLNHSIDK. A helical membrane pass occupies residues 429 to 449; sequence IDIFCIQFSMIVITLSLFVMI. The Extracellular portion of the chain corresponds to 450–459; the sequence is RFGEKTPTSM. Residues 460-480 form a helical membrane-spanning segment; the sequence is IIFALLQALSAFCSPTLQSGI. The Cytoplasmic segment spans residues 481 to 491; the sequence is IKYTSKKHTGE. A helical membrane pass occupies residues 492–512; sequence MFGAMALVRSCVMLVIPPILL. Residues 513 to 523 lie on the Extracellular side of the membrane; it reads KLYGSTVSVNP. A helical transmembrane segment spans residues 524 to 544; sequence SLFMYIPFSTSIVAILLTFFL. The Cytoplasmic segment spans residues 545-555; that stretch reads RIYKNPPLDGP.

It is found in the membrane. This is an uncharacterized protein from Saccharomyces cerevisiae (strain ATCC 204508 / S288c) (Baker's yeast).